Consider the following 257-residue polypeptide: MYSVCDVVRDAVAQSHLCACPNDKLPQCKGVTKAPPECSVFHVAKLQDTKFKWKYTLDPLKAQKLNQINKDIEKDAITLKLLYGIELSPEDLEWWKMQRCLINKKTGAKGGQFANKYLERQDLELLGYSPTPIIGGDFMFTALPDKVLRTIPIAWDRFLNPAMMIFFLIILLCVILGIFYVLVRNTLRRKQKIKQHQMEIKRFIKEKEQDPYIHTSFESWPADPNKEWKELIPVYEAQGYCMADYRKKLGMPPGPNC.

2 consecutive transmembrane segments (helical) span residues 123–143 (LELLGYSPTPIIGGDFMFTAL) and 163–183 (MMIFFLIILLCVILGIFYVLV).

Belongs to the asfivirus C257R family.

The protein localises to the host membrane. Its subcellular location is the virion. The sequence is that of Transmembrane protein C257L from African swine fever virus (isolate Tick/South Africa/Pretoriuskop Pr4/1996) (ASFV).